Here is a 285-residue protein sequence, read N- to C-terminus: MPLDATTQLVTLLGHPVEHSLSPRIHNTAFRAQDVNAAYVATPVRPEALGDAVAGLRALQFLGANVTTPHKEAVLPVLDEVTERARAVGAVNTIVRDGGRLHGDNTDIAGFLRPLEERGGDALEGAPMLVFGAGGAARAVVYGLLSHYRPERLTIVARRPDQAEGLAADLAAHDPDGALRVSSFEEAALSVRTSRLVVNATPLGMAPDRRGQTPWPNPVDFTADHVVYDLVYTPEETRLLREAAAEGATPIGGLDMLVEQAAAAYRQWTDRGMPQAAVYDALRAD.

Residues 20-22 (SLS) and threonine 67 contribute to the shikimate site. Lysine 71 serves as the catalytic Proton acceptor. NADP(+) is bound at residue glutamate 83. Positions 92 and 107 each coordinate shikimate. NADP(+)-binding positions include 132–136 (GAGGA) and leucine 230. Tyrosine 232 serves as a coordination point for shikimate. Position 253 (glycine 253) interacts with NADP(+).

This sequence belongs to the shikimate dehydrogenase family. Homodimer.

The enzyme catalyses shikimate + NADP(+) = 3-dehydroshikimate + NADPH + H(+). Its pathway is metabolic intermediate biosynthesis; chorismate biosynthesis; chorismate from D-erythrose 4-phosphate and phosphoenolpyruvate: step 4/7. Involved in the biosynthesis of the chorismate, which leads to the biosynthesis of aromatic amino acids. Catalyzes the reversible NADPH linked reduction of 3-dehydroshikimate (DHSA) to yield shikimate (SA). This Salinibacter ruber (strain DSM 13855 / M31) protein is Shikimate dehydrogenase (NADP(+)).